The following is a 303-amino-acid chain: Acetylglutamate kinase (303 aa).

Substrate-binding positions include 69 to 70 (GG), Arg91, and Asn190.

The protein belongs to the acetylglutamate kinase family. ArgB subfamily.

The protein localises to the cytoplasm. It carries out the reaction N-acetyl-L-glutamate + ATP = N-acetyl-L-glutamyl 5-phosphate + ADP. The protein operates within amino-acid biosynthesis; L-arginine biosynthesis; N(2)-acetyl-L-ornithine from L-glutamate: step 2/4. Catalyzes the ATP-dependent phosphorylation of N-acetyl-L-glutamate. The protein is Acetylglutamate kinase of Nocardia farcinica (strain IFM 10152).